A 480-amino-acid chain; its full sequence is UDP-N-acetylmuramate--L-alanine ligase (480 aa).

129 to 135 is a binding site for ATP; that stretch reads GSHGKTT.

The protein belongs to the MurCDEF family.

Its subcellular location is the cytoplasm. The catalysed reaction is UDP-N-acetyl-alpha-D-muramate + L-alanine + ATP = UDP-N-acetyl-alpha-D-muramoyl-L-alanine + ADP + phosphate + H(+). It participates in cell wall biogenesis; peptidoglycan biosynthesis. Cell wall formation. In Syntrophus aciditrophicus (strain SB), this protein is UDP-N-acetylmuramate--L-alanine ligase.